A 127-amino-acid chain; its full sequence is Large ribosomal subunit protein bL17 (127 aa).

This sequence belongs to the bacterial ribosomal protein bL17 family. As to quaternary structure, part of the 50S ribosomal subunit. Contacts protein L32.

The protein is Large ribosomal subunit protein bL17 of Lactiplantibacillus plantarum (strain ATCC BAA-793 / NCIMB 8826 / WCFS1) (Lactobacillus plantarum).